The chain runs to 355 residues: Heavy metal-associated isoprenylated plant protein 7 (355 aa).

Residues 1 to 58 (MGEEEKKPEAAEEKKMEEKKPEEKKEGEDKKVDAEKKGEDSDKKPQEGESNKDSKEDS) are compositionally biased toward basic and acidic residues. The disordered stretch occupies residues 1–74 (MGEEEKKPEA…APAPPPPPQE (74 aa)). Residues 63 to 73 (PEAPAPPPPPQ) show a composition bias toward pro residues. 2 consecutive HMA domains span residues 72 to 136 (PQEV…HRQV) and 170 to 234 (VVTV…KHAA). Residues C83 and C86 each coordinate a metal cation. The disordered stretch occupies residues 132–157 (THRQVQLLSPIPPPPPPPEKKAEEDK). The a metal cation site is built by C181 and C184. Residues 235 to 308 (IMKIDPPPPP…GGGEEEGKVV (74 aa)) form a disordered region. Residues 254 to 293 (EGEKKEEEKGEGESKGEEGKDDKAKTDEEKKEGDGGKGEG) are compositionally biased toward basic and acidic residues. Residue C352 is modified to Cysteine methyl ester. The S-farnesyl cysteine moiety is linked to residue C352. Positions 353–355 (TVM) are cleaved as a propeptide — removed in mature form.

This sequence belongs to the HIPP family. Post-translationally, efficiently farnesylated in vitro.

In terms of biological role, heavy-metal-binding protein. Binds zinc, copper and nickel in a reversible manner. This is Heavy metal-associated isoprenylated plant protein 7 from Arabidopsis thaliana (Mouse-ear cress).